A 63-amino-acid polypeptide reads, in one-letter code: MLCVPVFIILFIIIPFAPTSESQPKTKEEVAKASVHDNAERTLQRLWNQSHCCPIDLQCCPPG.

A signal peptide spans 1-22 (MLCVPVFIILFIIIPFAPTSES). The propeptide occupies 23-50 (QPKTKEEVAKASVHDNAERTLQRLWNQS). P62 bears the Proline amide mark.

Belongs to the conotoxin T superfamily. Contains 2 disulfide bonds that can be either 'C1-C3, C2-C4' or 'C1-C4, C2-C3', since these disulfide connectivities have been observed for conotoxins with cysteine framework V (for examples, see AC P0DQQ7 and AC P81755). As to expression, expressed by the venom duct.

The protein resides in the secreted. The chain is Conotoxin Vi5.1b from Conus virgo (Virgin cone).